Reading from the N-terminus, the 329-residue chain is Secretory carrier-associated membrane protein 2 (329 aa).

The segment at 1–74 is disordered; that stretch reads MSAFDTNPFA…PSVEPAQPTP (74 aa). The Cytoplasmic portion of the chain corresponds to 1 to 153; it reads MSAFDTNPFA…DYQRICKMLY (153 aa). Polar residues-rich tracts occupy residues 19 to 31 and 40 to 51; these read QDPSVTQLTNAPQ and FSETNAATTVPA. A helical transmembrane segment spans residues 154–174; sequence YLWMLHSVTLFLNLLACLAWF. Residues 175–181 are Lumenal-facing; it reads TSDAANG. A helical transmembrane segment spans residues 182–202; it reads TAFGLSILWFLIFTPCAFLCW. At 203-218 the chain is on the cytoplasmic side; that stretch reads YRPIYKAFRSDNSFSF. Residues 203–218 form an interaction with SLC9A7 region; that stretch reads YRPIYKAFRSDNSFSF. The chain crosses the membrane as a helical span at residues 219-239; the sequence is FVFFFVFFCQIGIYFIQLIGL. At 240-262 the chain is on the lumenal side; the sequence is PNLGTSGWLAALSTMKNGPLAVT. The helical transmembrane segment at 263–283 threads the bilayer; it reads IIMMVVAGFFTLCAGLSLFLL. Residues 284–329 are Cytoplasmic-facing; it reads QRVHAFYRRTGASFQQAQEEFSQGIFSSRTFRGAASSAARGAFQGN. Residues serine 319 and serine 320 each carry the phosphoserine modification.

Belongs to the SCAMP family. Interacts with SLC6A4 and SLC9A7. Interacts with SLC9A5; this interaction regulates SLC9A5 cell-surface targeting and SLC9A5 activity.

It localises to the golgi apparatus. It is found in the trans-Golgi network membrane. The protein localises to the recycling endosome membrane. Functionally, functions in post-Golgi recycling pathways. Acts as a recycling carrier to the cell surface. The sequence is that of Secretory carrier-associated membrane protein 2 (Scamp2) from Mus musculus (Mouse).